Consider the following 346-residue polypeptide: Biotin synthase (346 aa).

Positions 38–256 (QQVQVSTLLS…IAVARIMMPT (219 aa)) constitute a Radical SAM core domain. [4Fe-4S] cluster-binding residues include C53, C57, and C60. Positions 97, 128, 188, and 260 each coordinate [2Fe-2S] cluster.

Belongs to the radical SAM superfamily. Biotin synthase family. Homodimer. It depends on [4Fe-4S] cluster as a cofactor. [2Fe-2S] cluster is required as a cofactor.

It carries out the reaction (4R,5S)-dethiobiotin + (sulfur carrier)-SH + 2 reduced [2Fe-2S]-[ferredoxin] + 2 S-adenosyl-L-methionine = (sulfur carrier)-H + biotin + 2 5'-deoxyadenosine + 2 L-methionine + 2 oxidized [2Fe-2S]-[ferredoxin]. The protein operates within cofactor biosynthesis; biotin biosynthesis; biotin from 7,8-diaminononanoate: step 2/2. Functionally, catalyzes the conversion of dethiobiotin (DTB) to biotin by the insertion of a sulfur atom into dethiobiotin via a radical-based mechanism. The sequence is that of Biotin synthase from Salmonella dublin (strain CT_02021853).